The sequence spans 304 residues: Protein INO2 (304 aa).

The region spanning 236–290 is the bHLH domain; that stretch reads VRKWKHVQMEKIRRINTKEAFERLIKSVRTPPKENGKRIPKHILLTCVMNDIKSI.

Efficient DNA binding requires dimerization with another bHLH protein.

It localises to the nucleus. Its function is as follows. Positive regulatory factor required for depression of the coregulated phospholipid biosynthetic enzymes. Also involved in the expression of ITR1. The chain is Protein INO2 (INO2) from Saccharomyces cerevisiae (strain ATCC 204508 / S288c) (Baker's yeast).